We begin with the raw amino-acid sequence, 301 residues long: Glycine--tRNA ligase alpha subunit (301 aa).

Belongs to the class-II aminoacyl-tRNA synthetase family. As to quaternary structure, tetramer of two alpha and two beta subunits.

It localises to the cytoplasm. The enzyme catalyses tRNA(Gly) + glycine + ATP = glycyl-tRNA(Gly) + AMP + diphosphate. This is Glycine--tRNA ligase alpha subunit from Nitrosospira multiformis (strain ATCC 25196 / NCIMB 11849 / C 71).